A 3926-amino-acid chain; its full sequence is Hybrid PKS-NRPS synthetase LUC5 (3926 aa).

Positions 8-439 constitute a Ketosynthase family 3 (KS3) domain; that stretch reads REPIAIVGTA…GTNAHAIIES (432 aa). Active-site for beta-ketoacyl synthase activity residues include Cys-181, His-318, and His-359. The interval 545-863 is malonyl-CoA:ACP transacylase (MAT) domain; that stretch reads VFTGQGAQWP…QGALTRNVHD (319 aa). An N-terminal hotdog fold region spans residues 932-1065; that stretch reads HPLLGTRSTE…GHLRVDFGSE (134 aa). Positions 932–1225 are dehydratase (DH) domain; it reads HPLLGTRSTE…GLTCTSLLRP (294 aa). Residues 932-1228 form the PKS/mFAS DH domain; sequence HPLLGTRSTE…CTSLLRPGPS (297 aa). His-964 serves as the catalytic Proton acceptor; for dehydratase activity. The segment at 1081-1228 is C-terminal hotdog fold; it reads LTSVNIERFY…CTSLLRPGPS (148 aa). Asp-1138 functions as the Proton donor; for dehydratase activity in the catalytic mechanism. The C-methyltransferase (CMeT) domain stretch occupies residues 1344-1572; the sequence is IRAVGENLTE…VNDFYDPSKY (229 aa). The segment at 2091–2265 is ketoreductase (KR) domain 1; that stretch reads TYLLAGCTGG…AASVIHIGMI (175 aa). In terms of domain architecture, Carrier 1 spans 2371 to 2448; the sequence is EMLEVVEEEF…EICSTAVASL (78 aa). Ser-2408 carries the post-translational modification O-(pantetheine 4'-phosphoryl)serine. Polar residues predominate over residues 2474–2506; the sequence is VSGNGSSSSRAPTEFNSSTLKSGAQSTQGTSVS. Residues 2474–2518 form a disordered region; that stretch reads VSGNGSSSSRAPTEFNSSTLKSGAQSTQGTSVSGDKDTNSVDGSA. Over residues 2507 to 2518 the composition is skewed to basic and acidic residues; it reads GDKDTNSVDGSA. Residues 2525 to 2810 form a condensation region; the sequence is PLSFAQERIW…VNLLPLRFQL (286 aa). An adenylation region spans residues 2979–3389; the sequence is DWVKRQPDAI…RIAGDSQIKL (411 aa). A Carrier 2 domain is found at 3501 to 3580; the sequence is ETLTTTQERL…GMAAKIDGST (80 aa). At Ser-3540 the chain carries O-(pantetheine 4'-phosphoryl)serine. Positions 3619-3840 are thiolester reductase (TE) domain; the sequence is LTGATGFLGL…DFVPVEQVAD (222 aa).

It in the C-terminal section; belongs to the NRP synthetase family.

It functions in the pathway mycotoxin biosynthesis. Hybrid PKS-NRPS synthetase; part of the gene cluster that mediates the biosynthesis of the mycotoxin lucilactaene and the lucilactaene-related compound NG-391 that act as cell cycle inhibitors with potent growth inhibitory activity against malarial parasites, moderate growth inhibitory activity against cancer cells, and no activity against bacteria and fungi. The hybrid PKS-NRPS synthetase LUC5 is responsible for the condensation of one acetyl-coenzyme A (CoA) unit with six malonyl-CoA units and the amide linkage of the arising heptaketide and homoserine, subsequently releasing the first intermediate prelucilactaene B, as an alcohol with an open ring structure. Lucilactaene and NG-391 lack the 7-methyl group present in fusarins which is inserted in fusarins by the C-methyltransferase (CMeT) domain of the fusarin synthetase FUS1, suggesting that the CMet domain of LUC5 does not methylate this position. Within the pathway, both the cytochrome P450 monooxygenase LUC2 and the hydrolase LUC6 function in parallel in modification of prelucilactaene B. LUC6 may catalyze the 2-pyrrolidone ring formation to form prelucilactaene C from prelucilactaene B, followed by C-15 hydroxylation by the same enzyme to give prelucilactaene D, which is then converted to prelucilactaene E by epoxidation, and finally to prelucilactaene F by cyclization. Prelucilactane D, prelucilactaene E, and prelucilactaene F can be converted to dihydrolucilactaene, NG391, and lucilactaene, respectively, via C-20 methyl group hydroxylation by the cytochrome P450 monooxygenase LUC2. However, LUC2, unlike FUS8 in fusarin C biosynthesis, is not enough for the full oxidation of the C-20 methyl group into carboxylic acid, which is a prerequisite for the final methylation step. The aldehyde dehydrogenase LUC3 is involved in the biosynthesis by further oxidation of the C-20 alcoholic analog prelucilactaene G into a carboxylic derivative. This unidentified carboxylic derivative may be converted to demethyllucilactaene. As the last step, the methyltransferase LUC1 methylates the hydroxyl group at C-21 of demethyllucilactaene to generate lucilactaene. In Fusarium sp, this protein is Hybrid PKS-NRPS synthetase LUC5.